Consider the following 249-residue polypeptide: General transcription factor IIF subunit 2 (249 aa).

Residue A2 is modified to N-acetylalanine. Residues K22, K33, and K137 each carry the N6-acetyllysine modification. S142 carries the phosphoserine modification. Residues G227 and H229 each contribute to the DNA site. At S248 the chain carries Phosphoserine.

This sequence belongs to the TFIIF beta subunit family. In terms of assembly, heterodimer of an alpha and a beta subunit. Interacts with HTATSF1 and URI1. Interacts with GPBP1. Interacts with GTF2B (via N-terminus); this interaction is inhibited in presence of GTF2F1. Part of TBP-based Pol II pre-initiation complex (PIC), in which Pol II core assembles with general transcription factors and other specific initiation factors including GTF2E1, GTF2E2, GTF2F1, GTF2F2, TCEA1, ERCC2, ERCC3, GTF2H2, GTF2H3, GTF2H4, GTF2H5, GTF2A1, GTF2A2, GTF2B and TBP; this large multi-subunit PIC complex mediates DNA unwinding and targets Pol II core to the transcription start site where the first phosphodiester bond forms.

Its subcellular location is the nucleus. TFIIF is a general transcription initiation factor that binds to RNA polymerase II and helps to recruit it to the initiation complex in collaboration with TFIIB. The sequence is that of General transcription factor IIF subunit 2 (Gtf2f2) from Mus musculus (Mouse).